The following is a 516-amino-acid chain: Exodeoxyribonuclease 7 large subunit (516 aa).

This sequence belongs to the XseA family. As to quaternary structure, heterooligomer composed of large and small subunits.

The protein resides in the cytoplasm. The catalysed reaction is Exonucleolytic cleavage in either 5'- to 3'- or 3'- to 5'-direction to yield nucleoside 5'-phosphates.. Bidirectionally degrades single-stranded DNA into large acid-insoluble oligonucleotides, which are then degraded further into small acid-soluble oligonucleotides. In Chlamydia trachomatis serovar A (strain ATCC VR-571B / DSM 19440 / HAR-13), this protein is Exodeoxyribonuclease 7 large subunit.